Reading from the N-terminus, the 205-residue chain is UPF0056 membrane protein MJ1677 (205 aa).

6 consecutive transmembrane segments (helical) span residues Ile7 to Ile27, Ala49 to Ile69, Ser70 to Val90, Ile112 to Met132, Phe145 to Ala165, and Gly185 to Leu205.

Belongs to the UPF0056 (MarC) family.

The protein localises to the cell membrane. This is UPF0056 membrane protein MJ1677 from Methanocaldococcus jannaschii (strain ATCC 43067 / DSM 2661 / JAL-1 / JCM 10045 / NBRC 100440) (Methanococcus jannaschii).